The following is a 483-amino-acid chain: Kynureninase 1 (483 aa).

Residues L147, T148, 175–178 (FPSD), S232, D261, H264, and Y286 contribute to the pyridoxal 5'-phosphate site. N6-(pyridoxal phosphate)lysine is present on K287. Residues W326 and N354 each coordinate pyridoxal 5'-phosphate.

Belongs to the kynureninase family. In terms of assembly, homodimer. Requires pyridoxal 5'-phosphate as cofactor.

It localises to the cytoplasm. It catalyses the reaction L-kynurenine + H2O = anthranilate + L-alanine + H(+). The catalysed reaction is 3-hydroxy-L-kynurenine + H2O = 3-hydroxyanthranilate + L-alanine + H(+). The protein operates within amino-acid degradation; L-kynurenine degradation; L-alanine and anthranilate from L-kynurenine: step 1/1. Its pathway is cofactor biosynthesis; NAD(+) biosynthesis; quinolinate from L-kynurenine: step 2/3. Functionally, catalyzes the cleavage of L-kynurenine (L-Kyn) and L-3-hydroxykynurenine (L-3OHKyn) into anthranilic acid (AA) and 3-hydroxyanthranilic acid (3-OHAA), respectively. This is Kynureninase 1 (bna5-1) from Aspergillus terreus (strain NIH 2624 / FGSC A1156).